We begin with the raw amino-acid sequence, 100 residues long: Urease subunit gamma (100 aa).

The protein belongs to the urease gamma subunit family. In terms of assembly, heterotrimer of UreA (gamma), UreB (beta) and UreC (alpha) subunits. Three heterotrimers associate to form the active enzyme.

The protein localises to the cytoplasm. The enzyme catalyses urea + 2 H2O + H(+) = hydrogencarbonate + 2 NH4(+). Its pathway is nitrogen metabolism; urea degradation; CO(2) and NH(3) from urea (urease route): step 1/1. The polypeptide is Urease subunit gamma (Paracidovorax citrulli (strain AAC00-1) (Acidovorax citrulli)).